The sequence spans 132 residues: Large ribosomal subunit protein uL14 (132 aa).

It belongs to the universal ribosomal protein uL14 family. As to quaternary structure, part of the 50S ribosomal subunit. Forms a cluster with proteins L3 and L24e, part of which may contact the 16S rRNA in 2 intersubunit bridges.

Functionally, binds to 23S rRNA. Forms part of two intersubunit bridges in the 70S ribosome. The sequence is that of Large ribosomal subunit protein uL14 from Methanobrevibacter smithii (strain ATCC 35061 / DSM 861 / OCM 144 / PS).